Consider the following 44-residue polypeptide: Cuticle protein CP463 (44 aa).

2 tandem repeats follow at residues 3 to 20 and 27 to 44.

In terms of tissue distribution, calcified shell.

The sequence is that of Cuticle protein CP463 from Cancer pagurus (Rock crab).